Consider the following 148-residue polypeptide: Inner membrane protein YccF (148 aa).

Residues 1–14 (MRTVLNILNFVLGG) lie on the Periplasmic side of the membrane. Residues 15–37 (FATTLGWLLATLVSIVLIFTLPL) traverse the membrane as a helical segment. Residues 38-76 (TRSCWEITKLSLVPYGNEAIHVDELNPAGKNVLLNTGGT) lie on the Cytoplasmic side of the membrane. The chain crosses the membrane as a helical span at residues 77–99 (VLNIFWLIFFGWWLCLMHIATGI). Topologically, residues 100–102 (AQC) are periplasmic. Residues 103–125 (ISIIGIPVGIANFKIAAIALWPV) form a helical membrane-spanning segment. The Cytoplasmic segment spans residues 126–148 (GRRVVSVETAQAAREANARRRFE).

The protein resides in the cell inner membrane. This chain is Inner membrane protein YccF (yccF), found in Escherichia coli (strain K12).